Here is a 313-residue protein sequence, read N- to C-terminus: Dihydroorotate dehydrogenase B (NAD(+)), catalytic subunit (313 aa).

FMN-binding positions include Ser21 and 45 to 46 (KA). Substrate is bound by residues Lys45 and 69 to 73 (NAIGL). FMN-binding residues include Asn99 and Asn127. Asn127 is a binding site for substrate. Cys130 (nucleophile) is an active-site residue. FMN-binding residues include Lys165 and Ile191. 192–193 (NT) contacts substrate. FMN contacts are provided by residues Gly217, 243 to 244 (GG), and 265 to 266 (GT).

It belongs to the dihydroorotate dehydrogenase family. Type 1 subfamily. Heterotetramer of 2 PyrK and 2 PyrD type B subunits. FMN is required as a cofactor.

It localises to the cytoplasm. The enzyme catalyses (S)-dihydroorotate + NAD(+) = orotate + NADH + H(+). The protein operates within pyrimidine metabolism; UMP biosynthesis via de novo pathway; orotate from (S)-dihydroorotate (NAD(+) route): step 1/1. Catalyzes the conversion of dihydroorotate to orotate with NAD(+) as electron acceptor. The polypeptide is Dihydroorotate dehydrogenase B (NAD(+)), catalytic subunit (pyrD) (Geobacillus kaustophilus (strain HTA426)).